The chain runs to 80 residues: Exodeoxyribonuclease 7 small subunit (80 aa).

The protein belongs to the XseB family. Heterooligomer composed of large and small subunits.

It localises to the cytoplasm. The enzyme catalyses Exonucleolytic cleavage in either 5'- to 3'- or 3'- to 5'-direction to yield nucleoside 5'-phosphates.. In terms of biological role, bidirectionally degrades single-stranded DNA into large acid-insoluble oligonucleotides, which are then degraded further into small acid-soluble oligonucleotides. This is Exodeoxyribonuclease 7 small subunit from Escherichia coli (strain SE11).